Here is a 396-residue protein sequence, read N- to C-terminus: Elongation factor Tu (396 aa).

The tr-type G domain occupies 10–205 (KSHANIGTIG…AVDEYIPTPE (196 aa)). Residues 19-26 (GHVDHGKT) are G1. Residue 19-26 (GHVDHGKT) participates in GTP binding. T26 is a Mg(2+) binding site. The tract at residues 61–65 (GITIS) is G2. A G3 region spans residues 82–85 (DCPG). GTP-binding positions include 82–86 (DCPGH) and 137–140 (NKCD). Residues 137 to 140 (NKCD) form a G4 region. A G5 region spans residues 175–177 (SAL).

This sequence belongs to the TRAFAC class translation factor GTPase superfamily. Classic translation factor GTPase family. EF-Tu/EF-1A subfamily. Monomer.

The protein resides in the cytoplasm. It carries out the reaction GTP + H2O = GDP + phosphate + H(+). In terms of biological role, GTP hydrolase that promotes the GTP-dependent binding of aminoacyl-tRNA to the A-site of ribosomes during protein biosynthesis. In Bacillus velezensis (strain DSM 23117 / BGSC 10A6 / LMG 26770 / FZB42) (Bacillus amyloliquefaciens subsp. plantarum), this protein is Elongation factor Tu.